Here is a 346-residue protein sequence, read N- to C-terminus: MEEKYLPELMAEKDSLDPSFTHALRLVNREIEKFQKGEGKEEEKYIDVVINKNMKLGQKVLIPVKQFPKFNFVGKLLGPRGNSLKRLQEETLTKMSILGKGSMRDKAKEEELRKSGEAKYFHLNDDLHVLIEVFAPPAEAYARMGHALEEIKKFLIPDYNDEIRQAQLQELTYLNGGSENADVPVVRGKSTLRTRGVTTPAITRGRGGVTARPVAVGVPRGTPTPRGVLSTRGPVSRGRGLLTPRARGVPPTGYRPPPPPPTQETYGEYDYDDGYGTAYDEQSYDSYDNSYSTPAQSAADYYDYGHGLSEDAYDSYGQEEWTNSRHKAPSARTAKGVYRDQPYGRY.

The involved in homodimerization stretch occupies residues 1-160; that stretch reads MEEKYLPELM…IKKFLIPDYN (160 aa). A Glycyl lysine isopeptide (Lys-Gly) (interchain with G-Cter in SUMO2) cross-link involves residue Lys-4. A KH domain is found at 61–127; sequence LIPVKQFPKF…AKYFHLNDDL (67 aa). 2 disordered regions span residues 212–266 and 317–346; these read RPVA…QETY and GQEE…YGRY. Over residues 253–262 the composition is skewed to pro residues; sequence GYRPPPPPPT.

The protein belongs to the KHDRBS family. In terms of assembly, self-associates to form homooligomers; dimerization increases RNA affinity. Interacts with KHDRBS2/SLM-1. Interacts with KHDRBS1/SAM68; heterooligomer formation of KHDRBS family proteins may modulate RNA substrate specificity. Interacts with the splicing regulatory proteins SFRS9, SAFB and YTHDC1. Interacts with HNRPL, RBMX, p85 subunit of PI3-kinase, SERPINB5. Phosphorylated on tyrosine residues by PTK6. As to expression, highly expressed in testis and brain. In adult cerebellum expressed predominantly in internal granular layer interneurons and in hippocampus is exclusively expressed in CA neurons; expression is restricted to neuronal subpopulations largely non-overlapping with expression of KHDRBS2/SLM-1.

Its subcellular location is the nucleus. Functionally, RNA-binding protein that plays a role in the regulation of alternative splicing and influences mRNA splice site selection and exon inclusion. Binds preferentially to the 5'-[AU]UAAA-3' motif in vitro. Binds optimally to RNA containing 5'-[AU]UAA-3' as a bipartite motif spaced by more than 15 nucleotides. Binds poly(A). RNA-binding abilities are down-regulated by tyrosine kinase PTK6. Involved in splice site selection of vascular endothelial growth factor. In vitro regulates CD44 alternative splicing by direct binding to purine-rich exonic enhancer. Can regulate alternative splicing of neurexins NRXN1-3 in the laminin G-like domain 6 containing the evolutionary conserved neurexin alternative spliced segment 4 (AS4) involved in neurexin selective targeting to postsynaptic partners such as neuroligins and LRRTM family members. High concentrations in forebrain structures block splicing inclusion of NRXN1-3 AS4 exons while low concentrations favor their inclusion. Targeted, cell-type specific splicing regulation of NRXN1 at AS4 is involved in neuronal glutamatergic synapse function and plasticity and is linked to behavioral aspects. Regulates expression of KHDRBS2/SLIM-1 in defined neuron populations in the hippocampus by modifying its alternative splicing resulting in a transcript predicted to undergo nonsense-mediated decay. Can bind FABP9 mRNA. May play a role as a negative regulator of cell growth. Inhibits cell proliferation. The polypeptide is KH domain-containing, RNA-binding, signal transduction-associated protein 3 (Khdrbs3) (Mus musculus (Mouse)).